The sequence spans 565 residues: NAD-dependent malic enzyme (565 aa).

Tyr104 serves as the catalytic Proton donor. Residue Arg157 participates in NAD(+) binding. Residue Lys175 is the Proton acceptor of the active site. A divalent metal cation-binding residues include Glu246, Asp247, and Asp270. 2 residues coordinate NAD(+): Asp270 and Asn418.

Belongs to the malic enzymes family. In terms of assembly, homotetramer. Mg(2+) serves as cofactor. Mn(2+) is required as a cofactor.

The catalysed reaction is (S)-malate + NAD(+) = pyruvate + CO2 + NADH. The enzyme catalyses oxaloacetate + H(+) = pyruvate + CO2. The polypeptide is NAD-dependent malic enzyme (Salmonella newport (strain SL254)).